The following is a 64-amino-acid chain: Prokaryotic ubiquitin-like protein Pup (64 aa).

The interval 1-37 (MAQEQTKRGGGGGDDDDIAGSTAAGQERREKLTEETD) is disordered. Residues 21–58 (STAAGQERREKLTEETDDLLDEIDDVLEENAEDFVRAY) are ARC ATPase binding. Positions 23–52 (AAGQERREKLTEETDDLLDEIDDVLEENAE) form a coiled coil. Q64 is subject to Deamidated glutamine. Q64 is covalently cross-linked (Isoglutamyl lysine isopeptide (Gln-Lys) (interchain with K-? in acceptor proteins)).

Belongs to the prokaryotic ubiquitin-like protein family. In terms of assembly, strongly interacts with the proteasome-associated ATPase ARC through a hydrophobic interface; the interacting region of Pup lies in its C-terminal half. There is one Pup binding site per ARC hexamer ring. In terms of processing, is modified by deamidation of its C-terminal glutamine to glutamate by the deamidase Dop, a prerequisite to the subsequent pupylation process.

It participates in protein degradation; proteasomal Pup-dependent pathway. Functionally, protein modifier that is covalently attached to lysine residues of substrate proteins, thereby targeting them for proteasomal degradation. The tagging system is termed pupylation. The protein is Prokaryotic ubiquitin-like protein Pup of Mycobacterium tuberculosis (strain ATCC 25177 / H37Ra).